Here is a 76-residue protein sequence, read N- to C-terminus: Defensin-like protein 163 (76 aa).

The signal sequence occupies residues 1–27; that stretch reads MAKLIYSYLFISMFVLSVLLALPNAEG. Cystine bridges form between cysteine 33–cysteine 76, cysteine 43–cysteine 62, cysteine 48–cysteine 70, and cysteine 52–cysteine 72.

The protein belongs to the DEFL family.

The protein resides in the secreted. This Arabidopsis thaliana (Mouse-ear cress) protein is Defensin-like protein 163 (LCR24).